Consider the following 194-residue polypeptide: IMP cyclohydrolase (194 aa).

It belongs to the archaeal IMP cyclohydrolase family.

The enzyme catalyses IMP + H2O = 5-formamido-1-(5-phospho-D-ribosyl)imidazole-4-carboxamide. Its pathway is purine metabolism; IMP biosynthesis via de novo pathway; IMP from 5-formamido-1-(5-phospho-D-ribosyl)imidazole-4-carboxamide: step 1/1. Catalyzes the cyclization of 5-formylamidoimidazole-4-carboxamide ribonucleotide to IMP. The protein is IMP cyclohydrolase of Halobacterium salinarum (strain ATCC 29341 / DSM 671 / R1).